Reading from the N-terminus, the 288-residue chain is Probable endonuclease 4 (288 aa).

Residues H75, H115, E153, D187, H190, H224, D237, H239, and E269 each contribute to the Zn(2+) site.

Belongs to the AP endonuclease 2 family. The cofactor is Zn(2+).

The enzyme catalyses Endonucleolytic cleavage to 5'-phosphooligonucleotide end-products.. Its function is as follows. Endonuclease IV plays a role in DNA repair. It cleaves phosphodiester bonds at apurinic or apyrimidinic (AP) sites, generating a 3'-hydroxyl group and a 5'-terminal sugar phosphate. This Chlamydia trachomatis serovar A (strain ATCC VR-571B / DSM 19440 / HAR-13) protein is Probable endonuclease 4.